The sequence spans 126 residues: uncharacterized protein (126 aa).

T68 carries the phosphothreonine modification.

This is an uncharacterized protein from Pseudomonas aeruginosa (strain UCBPP-PA14).